Reading from the N-terminus, the 388-residue chain is Non-structural maintenance of chromosome element 5 (388 aa).

Component of the smc5/smc6 complex which consists of two subcomplexes, smc5-smc6-nse2 and nse1-nse2-nse4. Interacts with nse6 and rfp1.

It is found in the cytoplasm. The protein localises to the nucleus. Its subcellular location is the chromosome. In terms of biological role, acts in a DNA repair pathway for removal of UV-induced DNA damage that is distinct from classical nucleotide excision repair and in repair of ionizing radiation damage. Functions in homologous recombination repair of DNA double strand breaks and in recovery of stalled replication forks. May prevent formation of excessive Holliday junctions or assist in their resolution. The protein is Non-structural maintenance of chromosome element 5 (nse5) of Schizosaccharomyces pombe (strain 972 / ATCC 24843) (Fission yeast).